A 106-amino-acid chain; its full sequence is UPF0145 protein Fphi_1781 (106 aa).

This sequence belongs to the UPF0145 family.

This chain is UPF0145 protein Fphi_1781, found in Francisella philomiragia subsp. philomiragia (strain ATCC 25017 / CCUG 19701 / FSC 153 / O#319-036).